We begin with the raw amino-acid sequence, 689 residues long: DNA ligase (689 aa).

Residues aspartate 40–aspartate 44, serine 89–leucine 90, and glutamate 121 contribute to the NAD(+) site. The active-site N6-AMP-lysine intermediate is lysine 123. 4 residues coordinate NAD(+): arginine 144, glutamate 179, lysine 295, and lysine 319. Cysteine 413, cysteine 416, cysteine 431, and cysteine 437 together coordinate Zn(2+). Residues arginine 610–isoleucine 689 enclose the BRCT domain.

This sequence belongs to the NAD-dependent DNA ligase family. LigA subfamily. Requires Mg(2+) as cofactor. The cofactor is Mn(2+).

The catalysed reaction is NAD(+) + (deoxyribonucleotide)n-3'-hydroxyl + 5'-phospho-(deoxyribonucleotide)m = (deoxyribonucleotide)n+m + AMP + beta-nicotinamide D-nucleotide.. Its function is as follows. DNA ligase that catalyzes the formation of phosphodiester linkages between 5'-phosphoryl and 3'-hydroxyl groups in double-stranded DNA using NAD as a coenzyme and as the energy source for the reaction. It is essential for DNA replication and repair of damaged DNA. This chain is DNA ligase, found in Rickettsia bellii (strain RML369-C).